Reading from the N-terminus, the 234-residue chain is Large ribosomal subunit protein uL1 (234 aa).

This sequence belongs to the universal ribosomal protein uL1 family. As to quaternary structure, part of the 50S ribosomal subunit.

Functionally, binds directly to 23S rRNA. The L1 stalk is quite mobile in the ribosome, and is involved in E site tRNA release. Protein L1 is also a translational repressor protein, it controls the translation of the L11 operon by binding to its mRNA. This Aliivibrio salmonicida (strain LFI1238) (Vibrio salmonicida (strain LFI1238)) protein is Large ribosomal subunit protein uL1.